The sequence spans 586 residues: ATP-dependent lipid A-core flippase (586 aa).

4 helical membrane-spanning segments follow: residues Ala-25 to Ile-45, Leu-74 to Phe-94, Val-163 to Cys-183, and Val-264 to Trp-284. Positions Ile-28–Lys-317 constitute an ABC transmembrane type-1 domain. In terms of domain architecture, ABC transporter spans Val-349 to Ser-583. An ATP-binding site is contributed by Gly-382–Ser-389.

The protein belongs to the ABC transporter superfamily. Lipid exporter (TC 3.A.1.106) family. In terms of assembly, homodimer.

Its subcellular location is the cell inner membrane. The enzyme catalyses ATP + H2O + lipid A-core oligosaccharideSide 1 = ADP + phosphate + lipid A-core oligosaccharideSide 2.. Its function is as follows. Involved in lipopolysaccharide (LPS) biosynthesis. Translocates lipid A-core from the inner to the outer leaflet of the inner membrane. Transmembrane domains (TMD) form a pore in the inner membrane and the ATP-binding domain (NBD) is responsible for energy generation. This is ATP-dependent lipid A-core flippase from Saccharophagus degradans (strain 2-40 / ATCC 43961 / DSM 17024).